Consider the following 401-residue polypeptide: Dynactin subunit 2 (401 aa).

Residues 1–25 (MADPKYADLPGIARNEPDVYETSDL) form a disordered region. The residue at position 2 (A2) is an N-acetylalanine. Residue Y6 is modified to Phosphotyrosine. S83 is modified (phosphoserine). At Y86 the chain carries Phosphotyrosine. Residues 99 to 132 (PQQKYQRLLHEVQELTTEVEKIKTTVKESATEEK) are a coiled coil. T134 and T198 each carry phosphothreonine. A coiled-coil region spans residues 214-244 (EQDKFSQAAKVAELEKRLTELETAVRCDQDA). S320 is modified (phosphoserine). Positions 379–399 (RENLATVEGNFASIDERMKKL) form a coiled coil.

This sequence belongs to the dynactin subunit 2 family. In terms of assembly, subunit of dynactin, a multiprotein complex part of a tripartite complex with dynein and a adapter, such as BICDL1, BICD2 or HOOK3. The dynactin complex is built around ACTR1A/ACTB filament and consists of an actin-related filament composed of a shoulder domain, a pointed end and a barbed end. Its length is defined by its flexible shoulder domain. The soulder is composed of 2 DCTN1 subunits, 4 DCTN2 and 2 DCTN3. The 4 DCNT2 (via N-terminus) bind the ACTR1A filament and act as molecular rulers to determine the length. The pointed end is important for binding dynein-dynactin cargo adapters and consists of 4 subunits: ACTR10, DCNT4, DCTN5 and DCTN6. The barbed end is composed of a CAPZA1:CAPZB heterodimers, which binds ACTR1A/ACTB filament and dynactin and stabilizes dynactin. Interacts with BICD2 and CEP135. Interacts with DYNAP. Interacts with ECPAS. Interacts with MAPRE1.

Its subcellular location is the cytoplasm. The protein localises to the cytoskeleton. It localises to the microtubule organizing center. The protein resides in the centrosome. It is found in the membrane. Its function is as follows. Part of the dynactin complex that activates the molecular motor dynein for ultra-processive transport along microtubules. In the dynactin soulder domain, binds the ACTR1A filament and acts as a molecular ruler to determine the length. Modulates cytoplasmic dynein binding to an organelle, and plays a role in prometaphase chromosome alignment and spindle organization during mitosis. Involved in anchoring microtubules to centrosomes. May play a role in synapse formation during brain development. This is Dynactin subunit 2 from Homo sapiens (Human).